Reading from the N-terminus, the 128-residue chain is T-cell leukemia/lymphoma protein 1B (128 aa).

This sequence belongs to the TCL1 family. As to quaternary structure, interacts with AKT1 and AKT2 (via PH domain). Does not interact with AKT3. In terms of tissue distribution, expressed in a variety of tissues including placenta and testis.

Functionally, enhances the phosphorylation and activation of AKT1 and AKT2. The chain is T-cell leukemia/lymphoma protein 1B (TCL1B) from Homo sapiens (Human).